Reading from the N-terminus, the 227-residue chain is Cytochrome c oxidase subunit 2 (227 aa).

The Mitochondrial intermembrane segment spans residues 1 to 14; the sequence is MAHSFQLGFQDATS. The helical transmembrane segment at 15–45 threads the bilayer; it reads PIMEELLHFHDHTLMIVFLISSLVLYIITLM. Residues 46-59 are Mitochondrial matrix-facing; that stretch reads LTTKLTHTSTMDAQ. Residues 60–87 form a helical membrane-spanning segment; it reads EVETVWTILPAIILILIALPSLRILYLM. Topologically, residues 88–227 are mitochondrial intermembrane; that stretch reads DEINTPSLTV…HFENWSTSMI (140 aa). H161, C196, E198, C200, H204, and M207 together coordinate Cu cation. E198 serves as a coordination point for Mg(2+).

Belongs to the cytochrome c oxidase subunit 2 family. In terms of assembly, component of the cytochrome c oxidase (complex IV, CIV), a multisubunit enzyme composed of 14 subunits. The complex is composed of a catalytic core of 3 subunits MT-CO1, MT-CO2 and MT-CO3, encoded in the mitochondrial DNA, and 11 supernumerary subunits COX4I, COX5A, COX5B, COX6A, COX6B, COX6C, COX7A, COX7B, COX7C, COX8 and NDUFA4, which are encoded in the nuclear genome. The complex exists as a monomer or a dimer and forms supercomplexes (SCs) in the inner mitochondrial membrane with NADH-ubiquinone oxidoreductase (complex I, CI) and ubiquinol-cytochrome c oxidoreductase (cytochrome b-c1 complex, complex III, CIII), resulting in different assemblies (supercomplex SCI(1)III(2)IV(1) and megacomplex MCI(2)III(2)IV(2)). Found in a complex with TMEM177, COA6, COX18, COX20, SCO1 and SCO2. Interacts with TMEM177 in a COX20-dependent manner. Interacts with COX20. Interacts with COX16. The cofactor is Cu cation.

Its subcellular location is the mitochondrion inner membrane. The catalysed reaction is 4 Fe(II)-[cytochrome c] + O2 + 8 H(+)(in) = 4 Fe(III)-[cytochrome c] + 2 H2O + 4 H(+)(out). Its function is as follows. Component of the cytochrome c oxidase, the last enzyme in the mitochondrial electron transport chain which drives oxidative phosphorylation. The respiratory chain contains 3 multisubunit complexes succinate dehydrogenase (complex II, CII), ubiquinol-cytochrome c oxidoreductase (cytochrome b-c1 complex, complex III, CIII) and cytochrome c oxidase (complex IV, CIV), that cooperate to transfer electrons derived from NADH and succinate to molecular oxygen, creating an electrochemical gradient over the inner membrane that drives transmembrane transport and the ATP synthase. Cytochrome c oxidase is the component of the respiratory chain that catalyzes the reduction of oxygen to water. Electrons originating from reduced cytochrome c in the intermembrane space (IMS) are transferred via the dinuclear copper A center (CU(A)) of subunit 2 and heme A of subunit 1 to the active site in subunit 1, a binuclear center (BNC) formed by heme A3 and copper B (CU(B)). The BNC reduces molecular oxygen to 2 water molecules using 4 electrons from cytochrome c in the IMS and 4 protons from the mitochondrial matrix. The sequence is that of Cytochrome c oxidase subunit 2 (MT-CO2) from Cephalopachus bancanus (Western tarsier).